We begin with the raw amino-acid sequence, 353 residues long: MTIALGRFTKEENDLFDIMDDWLRRDRFVFVGWSGLLLFPCAYFALGGWFTGTTFVTSWYTHGLASSYLEGCNFLTAAVSTPANSLAHSLLLLWGPEAQGDFTRWCQLGGLWTFVALHGAFGLIGFMLRQFELARSVQLRPYNAIAFSAPIAVFVSVFLIYPLGQSGWFFAPSFGVAAIFRFILFFQGFHNWTLNPFHMMGVAGVLGAALLCAIHGATVENTLFEDGDGANTFRAFNPTQAEETYSMVTANRFWSQIFGVAFSNKRWLHFFMLFVPVTGLWMSAIGVVGLALNLRAYDFVSQEIRAAEDPEFETFYTKNILLNEGIRAWMAAQDQPHENLIFPEEVLPRGNAL.

Threonine 2 is modified (N-acetylthreonine). A Phosphothreonine modification is found at threonine 2. A helical membrane pass occupies residues 41–61 (CAYFALGGWFTGTTFVTSWYT). Histidine 118 provides a ligand contact to chlorophyll a. A helical transmembrane segment spans residues 125 to 141 (GFMLRQFELARSVQLRP). Residues glutamine 130 and asparagine 143 each coordinate pheophytin a. A helical transmembrane segment spans residues 153–166 (VFVSVFLIYPLGQS). Residue histidine 198 participates in chlorophyll a binding. The helical transmembrane segment at 208–228 (AALLCAIHGATVENTLFEDGD) threads the bilayer. The a plastoquinone site is built by histidine 215 and phenylalanine 262. Position 215 (histidine 215) interacts with Fe cation. Histidine 269 is a Fe cation binding site. The chain crosses the membrane as a helical span at residues 279–295 (GLWMSAIGVVGLALNLR).

Belongs to the reaction center PufL/M/PsbA/D family. PSII is composed of 1 copy each of membrane proteins PsbA, PsbB, PsbC, PsbD, PsbE, PsbF, PsbH, PsbI, PsbJ, PsbK, PsbL, PsbM, PsbT, PsbX, PsbY, PsbZ, Psb30/Ycf12, at least 3 peripheral proteins of the oxygen-evolving complex and a large number of cofactors. It forms dimeric complexes. It depends on The D1/D2 heterodimer binds P680, chlorophylls that are the primary electron donor of PSII, and subsequent electron acceptors. It shares a non-heme iron and each subunit binds pheophytin, quinone, additional chlorophylls, carotenoids and lipids. There is also a Cl(-1) ion associated with D1 and D2, which is required for oxygen evolution. The PSII complex binds additional chlorophylls, carotenoids and specific lipids. as a cofactor.

Its subcellular location is the plastid. The protein resides in the chloroplast thylakoid membrane. The enzyme catalyses 2 a plastoquinone + 4 hnu + 2 H2O = 2 a plastoquinol + O2. In terms of biological role, photosystem II (PSII) is a light-driven water:plastoquinone oxidoreductase that uses light energy to abstract electrons from H(2)O, generating O(2) and a proton gradient subsequently used for ATP formation. It consists of a core antenna complex that captures photons, and an electron transfer chain that converts photonic excitation into a charge separation. The D1/D2 (PsbA/PsbD) reaction center heterodimer binds P680, the primary electron donor of PSII as well as several subsequent electron acceptors. D2 is needed for assembly of a stable PSII complex. In Liriodendron tulipifera (Tuliptree), this protein is Photosystem II D2 protein.